We begin with the raw amino-acid sequence, 251 residues long: MSEGTQNSTHFGYKTVEAEQKADMVAGVFHSVAAKYDIMNDVMSFGIHRMWKRFTIESAGARPGMKVLDLAGGTGDLTAKFSHLVGDKGQVTLADINDSMLKVGREKLRDKGIVGNVNYVQANAEALPFPDNHFDIITIAFGLRNVTDKDSAIRSMLRVLKPGGKLLILEFSKPQHDVMRKIYDLYSFKILPKMGSLITQDAESYEYLAESIRMHPDQDTLKGMMVDAGFEQVEYTNMTDGIVALHKGYKF.

S-adenosyl-L-methionine is bound by residues threonine 74, aspartate 95, and 123–124 (NA).

It belongs to the class I-like SAM-binding methyltransferase superfamily. MenG/UbiE family.

The enzyme catalyses a 2-demethylmenaquinol + S-adenosyl-L-methionine = a menaquinol + S-adenosyl-L-homocysteine + H(+). It catalyses the reaction a 2-methoxy-6-(all-trans-polyprenyl)benzene-1,4-diol + S-adenosyl-L-methionine = a 5-methoxy-2-methyl-3-(all-trans-polyprenyl)benzene-1,4-diol + S-adenosyl-L-homocysteine + H(+). It participates in quinol/quinone metabolism; menaquinone biosynthesis; menaquinol from 1,4-dihydroxy-2-naphthoate: step 2/2. The protein operates within cofactor biosynthesis; ubiquinone biosynthesis. In terms of biological role, methyltransferase required for the conversion of demethylmenaquinol (DMKH2) to menaquinol (MKH2) and the conversion of 2-polyprenyl-6-methoxy-1,4-benzoquinol (DDMQH2) to 2-polyprenyl-3-methyl-6-methoxy-1,4-benzoquinol (DMQH2). The chain is Ubiquinone/menaquinone biosynthesis C-methyltransferase UbiE from Shewanella sediminis (strain HAW-EB3).